The chain runs to 193 residues: MTKKHHKEQEEIQETIKTEAAEENVGDETVAIPAATESDIEAEIAARDAEIQKLRDEVMRRAAEFENFRKQKEREAAQSGKRMLENTVRDLLPLLDDLKRLMEHIPAELQEMAEAKPFVEGVELIRKNFKSLLESKGVKEIEALGKVLDVNFHEAITQIDVPDTEPDTIVQEYQTGYTLGDRVIRHAKVIVAK.

The tract at residues 1–26 (MTKKHHKEQEEIQETIKTEAAEENVG) is disordered. Over residues 7-20 (KEQEEIQETIKTEA) the composition is skewed to basic and acidic residues.

The protein belongs to the GrpE family. Homodimer.

The protein resides in the cytoplasm. Functionally, participates actively in the response to hyperosmotic and heat shock by preventing the aggregation of stress-denatured proteins, in association with DnaK and GrpE. It is the nucleotide exchange factor for DnaK and may function as a thermosensor. Unfolded proteins bind initially to DnaJ; upon interaction with the DnaJ-bound protein, DnaK hydrolyzes its bound ATP, resulting in the formation of a stable complex. GrpE releases ADP from DnaK; ATP binding to DnaK triggers the release of the substrate protein, thus completing the reaction cycle. Several rounds of ATP-dependent interactions between DnaJ, DnaK and GrpE are required for fully efficient folding. This chain is Protein GrpE, found in Chlorobaculum parvum (strain DSM 263 / NCIMB 8327) (Chlorobium vibrioforme subsp. thiosulfatophilum).